The primary structure comprises 588 residues: Sulfite reductase [NADPH] hemoprotein beta-component (588 aa).

Residues Cys-442, Cys-448, Cys-487, and Cys-491 each coordinate [4Fe-4S] cluster. Cys-491 serves as a coordination point for siroheme.

This sequence belongs to the nitrite and sulfite reductase 4Fe-4S domain family. As to quaternary structure, alpha(8)-beta(8). The alpha component is a flavoprotein, the beta component is a hemoprotein. It depends on siroheme as a cofactor. Requires [4Fe-4S] cluster as cofactor.

It catalyses the reaction hydrogen sulfide + 3 NADP(+) + 3 H2O = sulfite + 3 NADPH + 4 H(+). Its pathway is sulfur metabolism; hydrogen sulfide biosynthesis; hydrogen sulfide from sulfite (NADPH route): step 1/1. In terms of biological role, component of the sulfite reductase complex that catalyzes the 6-electron reduction of sulfite to sulfide. This is one of several activities required for the biosynthesis of L-cysteine from sulfate. In Actinobacillus pleuropneumoniae serotype 7 (strain AP76), this protein is Sulfite reductase [NADPH] hemoprotein beta-component.